Here is a 121-residue protein sequence, read N- to C-terminus: Small ribosomal subunit protein bS6 (121 aa).

Residues 94–121 (KAETGPSAVMKRVEKEEARKSSQQETAA) are disordered. Residues 104–115 (KRVEKEEARKSS) are compositionally biased toward basic and acidic residues.

The protein belongs to the bacterial ribosomal protein bS6 family.

Functionally, binds together with bS18 to 16S ribosomal RNA. The polypeptide is Small ribosomal subunit protein bS6 (Leptothrix cholodnii (strain ATCC 51168 / LMG 8142 / SP-6) (Leptothrix discophora (strain SP-6))).